The sequence spans 736 residues: Phosphoribosylformylglycinamidine synthase subunit PurL (736 aa).

H49 is a catalytic residue. Residues Y52 and K91 each contribute to the ATP site. E93 contacts Mg(2+). Substrate contacts are provided by residues 94–97 and R116; that span reads SHNH. H95 serves as the catalytic Proton acceptor. D117 is a Mg(2+) binding site. Residue Q240 participates in substrate binding. D268 contacts Mg(2+). 312–314 contacts substrate; it reads ESQ. ATP contacts are provided by D493 and G530. Position 531 (N531) interacts with Mg(2+). Substrate is bound at residue S533.

This sequence belongs to the FGAMS family. In terms of assembly, monomer. Part of the FGAM synthase complex composed of 1 PurL, 1 PurQ and 2 PurS subunits.

The protein resides in the cytoplasm. It catalyses the reaction N(2)-formyl-N(1)-(5-phospho-beta-D-ribosyl)glycinamide + L-glutamine + ATP + H2O = 2-formamido-N(1)-(5-O-phospho-beta-D-ribosyl)acetamidine + L-glutamate + ADP + phosphate + H(+). It participates in purine metabolism; IMP biosynthesis via de novo pathway; 5-amino-1-(5-phospho-D-ribosyl)imidazole from N(2)-formyl-N(1)-(5-phospho-D-ribosyl)glycinamide: step 1/2. Functionally, part of the phosphoribosylformylglycinamidine synthase complex involved in the purines biosynthetic pathway. Catalyzes the ATP-dependent conversion of formylglycinamide ribonucleotide (FGAR) and glutamine to yield formylglycinamidine ribonucleotide (FGAM) and glutamate. The FGAM synthase complex is composed of three subunits. PurQ produces an ammonia molecule by converting glutamine to glutamate. PurL transfers the ammonia molecule to FGAR to form FGAM in an ATP-dependent manner. PurS interacts with PurQ and PurL and is thought to assist in the transfer of the ammonia molecule from PurQ to PurL. The protein is Phosphoribosylformylglycinamidine synthase subunit PurL of Rhodopseudomonas palustris (strain BisB5).